The chain runs to 521 residues: Vang-like protein 2 (521 aa).

Positions 1 to 81 are disordered; the sequence is MDNDSQYSGY…TTVVTGTSEH (81 aa). At 1 to 108 the chain is on the cytoplasmic side; it reads MDNDSQYSGY…AKLDCSRHLG (108 aa). Positions 15–33 are enriched in basic residues; that stretch reads GHSRSSRKHRDRRERHRSK. Residues 57–67 show a composition bias toward basic and acidic residues; the sequence is ESTRGEDRDDN. Positions 69–81 are enriched in low complexity; it reads GETTTVVTGTSEH. A helical transmembrane segment spans residues 109 to 129; the sequence is VVIGGALALLSFLTPIAFMLL. Residues 130–147 are Extracellular-facing; that stretch reads PQILWREDLEQCGTACEG. A helical transmembrane segment spans residues 148–168; it reads LFISVAFKLLILLLGSWALFF. Over 169 to 178 the chain is Cytoplasmic; it reads RRPKAFFPRV. Residues 179–199 traverse the membrane as a helical segment; sequence FVFRALLMVLVFLLVVSYWLF. The Extracellular segment spans residues 200-218; the sequence is YGVRILESRDKNYQGIVQY. A helical transmembrane segment spans residues 219–239; it reads AVSLVDALLFVHYLAVVLLEL. The Cytoplasmic portion of the chain corresponds to 240–521; that stretch reads RQLQPQFTVK…VMRLQSETSV (282 aa). The short motif at 518–521 is the PDZ-binding element; the sequence is ETSV.

It belongs to the Vang family. In terms of assembly, interacts with dvl/dsh. Interacts with prickle3.

It is found in the cell membrane. Has a role in non-canonical Wnt/planar cell polarity (PCP) signaling; can recruit dvl/dsh and prickle from the cytoplasm to the plasma membrane. Acts in a PCP complex to regulate the polarized assembly of fibronectrin on the surface of the mesoderm during gastrulation. Regulates convergent extension in both dorsal mesoderm and neural tissue without affecting cell fate. Regulates neural fold closure during neurulation. May be required for cell surface localization of fzd3 and fzd6 in the inner ear. The protein is Vang-like protein 2 of Xenopus tropicalis (Western clawed frog).